Here is a 255-residue protein sequence, read N- to C-terminus: L-seryl-tRNA(Sec) kinase (255 aa).

7-14 (GLPSVGKS) provides a ligand contact to ATP.

It belongs to the L-seryl-tRNA(Sec) kinase family.

The enzyme catalyses L-seryl-tRNA(Sec) + ATP = O-phospho-L-seryl-tRNA(Sec) + ADP. Its pathway is aminoacyl-tRNA biosynthesis; selenocysteinyl-tRNA(Sec) biosynthesis; selenocysteinyl-tRNA(Sec) from L-seryl-tRNA(Sec) (archaeal/eukaryal route): step 1/2. Its function is as follows. Specifically phosphorylates seryl-tRNA(Sec) to O-phosphoseryl-tRNA(Sec), an activated intermediate for selenocysteine biosynthesis. The protein is L-seryl-tRNA(Sec) kinase (pstK) of Methanococcus maripaludis (strain DSM 14266 / JCM 13030 / NBRC 101832 / S2 / LL).